A 352-amino-acid chain; its full sequence is Biotin synthase (352 aa).

In terms of domain architecture, Radical SAM core spans 44–262 (NRVQVSTLLS…LAVARILMPK (219 aa)). The [4Fe-4S] cluster site is built by Cys-59, Cys-63, and Cys-66. [2Fe-2S] cluster is bound by residues Cys-103, Cys-134, Cys-194, and Arg-266.

The protein belongs to the radical SAM superfamily. Biotin synthase family. Homodimer. [4Fe-4S] cluster serves as cofactor. It depends on [2Fe-2S] cluster as a cofactor.

It catalyses the reaction (4R,5S)-dethiobiotin + (sulfur carrier)-SH + 2 reduced [2Fe-2S]-[ferredoxin] + 2 S-adenosyl-L-methionine = (sulfur carrier)-H + biotin + 2 5'-deoxyadenosine + 2 L-methionine + 2 oxidized [2Fe-2S]-[ferredoxin]. Its pathway is cofactor biosynthesis; biotin biosynthesis; biotin from 7,8-diaminononanoate: step 2/2. In terms of biological role, catalyzes the conversion of dethiobiotin (DTB) to biotin by the insertion of a sulfur atom into dethiobiotin via a radical-based mechanism. The protein is Biotin synthase of Pseudomonas putida (strain GB-1).